We begin with the raw amino-acid sequence, 287 residues long: Mu-like prophage FluMu DNA transposition protein B (287 aa).

The HTH cro/C1-type domain occupies 7–62; the sequence is LKQHLSDSQITQAQLAREAGVNAGALSAYLNDNYKGNIADVEAKLAAYLEKKAVQA. The segment at residues 18–37 is a DNA-binding region (H-T-H motif); that stretch reads QAQLAREAGVNAGALSAYLN. An ATP-binding site is contributed by 98–105; it reads GMSGVGKT.

This protein is a non-specific DNA-binding and ATP-hydrolyzing protein essential for bacteriophage integration and replication. This is Mu-like prophage FluMu DNA transposition protein B from Haemophilus influenzae (strain ATCC 51907 / DSM 11121 / KW20 / Rd).